The chain runs to 136 residues: uncharacterized protein (136 aa).

This is an uncharacterized protein from Leptolyngbya boryana (Plectonema boryanum).